The primary structure comprises 105 residues: Nitrogen fixation nifHD region glnB-like protein 1 (105 aa).

This sequence belongs to the P(II) protein family.

Could be involved in the regulation of nitrogen fixation. In Methanococcus maripaludis (Methanococcus deltae), this protein is Nitrogen fixation nifHD region glnB-like protein 1 (glnBI).